Consider the following 326-residue polypeptide: Microtubule-associated protein RP/EB family member 2 (326 aa).

Position 9 is a phosphoserine (serine 9). The Calponin-homology (CH) domain maps to 56–158; the sequence is TMSRHDIIAW…FIQWFKKFYD (103 aa). Tyrosine 166 bears the Phosphotyrosine mark. 2 disordered regions span residues 170 to 239 and 297 to 326; these read EARQ…DKDL and YASD…QEEY. The tract at residues 186–326 is DCTN1-binding; it reads QIFNLPKKSH…DQQPQQQEEY (141 aa). Positions 199–233 are enriched in low complexity; the sequence is SPTAGAAKSSPAAKPGSTPSRPSSAKRASSSGSAS. Serine 218 and serine 235 each carry phosphoserine. One can recognise an EB1 C-terminal domain in the interval 235-305; that stretch reads SDKDLETQVI…LYASDEQEGQ (71 aa). The interval 258-301 is APC-binding; sequence EGVEKERDFYFGKLREIELLCQEHGQENDDLVQRLMEVLYASDE. The span at 300 to 312 shows a compositional bias: acidic residues; that stretch reads DEQEGQTEEPEVE. A compositionally biased stretch (low complexity) spans 317-326; that stretch reads DQQPQQQEEY.

It belongs to the MAPRE family. In terms of assembly, interacts with DCTN1. Interacts with APC (via C-terminal). Interacts with monomeric and polymerized tubulin. Interacts with SLAIN1. Interacts (via the N-terminal region) with BAG1. Interacts with ASB14. Interacts with HAX1; this interaction is essential for epidermal cell migration. In terms of processing, phosphorylated at Ser-235 by CK2 leading to enhanced cell adhesion. Phosphorylated by CDK1 and AURKB during mitosis reduces the binding affinity of MAPRE2 for microtubules. Ubiquitinated in an ASB14-dependent manner; leading to proteasomal degradation.

It is found in the cytoplasm. The protein resides in the cytoskeleton. Adapter protein that is involved in microtubule polymerization, and spindle function by stabilizing microtubules and anchoring them at centrosomes. Therefore, ensures mitotic progression and genome stability. Acts as a central regulator of microtubule reorganization in apico-basal epithelial differentiation. Plays a role during oocyte meiosis by regulating microtubule dynamics. Participates in neurite growth by interacting with plexin B3/PLXNB3 and microtubule reorganization during apico-basal epithelial differentiation. Also plays an essential role for cell migration and focal adhesion dynamics. Mechanistically, recruits HAX1 to microtubules in order to regulate focal adhesion dynamics. This Rattus norvegicus (Rat) protein is Microtubule-associated protein RP/EB family member 2 (Mapre2).